We begin with the raw amino-acid sequence, 304 residues long: Glycine--tRNA ligase alpha subunit (304 aa).

The protein belongs to the class-II aminoacyl-tRNA synthetase family. As to quaternary structure, tetramer of two alpha and two beta subunits.

The protein resides in the cytoplasm. It catalyses the reaction tRNA(Gly) + glycine + ATP = glycyl-tRNA(Gly) + AMP + diphosphate. This Photorhabdus laumondii subsp. laumondii (strain DSM 15139 / CIP 105565 / TT01) (Photorhabdus luminescens subsp. laumondii) protein is Glycine--tRNA ligase alpha subunit.